The following is a 545-amino-acid chain: MAAKEVVFGNDARVKMLAGVNILANAVKVTLGPKGRNVVLDKSFGSPLITKDGVSVAKEIELEDKFENMGAQMVKEVASKANDAAGDGTTTATVLAQAIVTEGLKAVAAGMNPMDLKRGIDKAVIAAVAELKALSQPCADSKAIAQVATISANSDESIGEIIATAMEKVGKEGVITVEEGQALENELDVVEGMQFDRGYLSPYFINKPETGSVELDHPFVLLVDKKISNIRELLPILEGLAKTGKPLLIVAEDVEGEALATLVVNNMRGIVKVAAVKAPGFGDRRKAMLQDVAILTGGTVIAEEIGLELEKATLEDLGTAKRVVITKDNTTIIDGNGEQAQIEARVSQIKQQIEESTSDYDKEKLQERMAKLAGGVAVIKVGAATEVEMKEKKARVEDALHATRAAVEEGVVPGGGVALVRVASKIAELEVLNEDQKHGVVIALRAMEAPLRQIATNAGEEASVVANTVKNGSGNFGYNAGNDTYGDMLEMGILDPTKVTRCALQFAASIAGLMITTEAMVAEIPQNSAPDMGGMGGMGGMGGMM.

Residues 30-33 (TLGP), lysine 51, 87-91 (DGTTT), glycine 415, and aspartate 495 contribute to the ATP site.

This sequence belongs to the chaperonin (HSP60) family. Forms a cylinder of 14 subunits composed of two heptameric rings stacked back-to-back. Interacts with the co-chaperonin GroES.

It localises to the cytoplasm. It catalyses the reaction ATP + H2O + a folded polypeptide = ADP + phosphate + an unfolded polypeptide.. In terms of biological role, together with its co-chaperonin GroES, plays an essential role in assisting protein folding. The GroEL-GroES system forms a nano-cage that allows encapsulation of the non-native substrate proteins and provides a physical environment optimized to promote and accelerate protein folding. The sequence is that of Chaperonin GroEL from Shewanella putrefaciens (strain CN-32 / ATCC BAA-453).